An 89-amino-acid polypeptide reads, in one-letter code: Small ribosomal subunit protein uS17 (89 aa).

Belongs to the universal ribosomal protein uS17 family. Part of the 30S ribosomal subunit.

In terms of biological role, one of the primary rRNA binding proteins, it binds specifically to the 5'-end of 16S ribosomal RNA. This chain is Small ribosomal subunit protein uS17, found in Novosphingobium aromaticivorans (strain ATCC 700278 / DSM 12444 / CCUG 56034 / CIP 105152 / NBRC 16084 / F199).